Here is a 727-residue protein sequence, read N- to C-terminus: Transcription activator of gluconeogenesis TRV_01442 (727 aa).

The segment covering 1–32 (MSPHQTTGQESDNMTVNGENAQASSQYIQSNE) has biased composition (polar residues). The interval 1–62 (MSPHQTTGQE…PSRPKRKKAK (62 aa)) is disordered. The segment covering 39-55 (ATEKKASAAKAAKDPSR) has biased composition (basic and acidic residues). A DNA-binding region (zn(2)-C6 fungal-type) is located at residues 65 to 93 (CYACQRGHLTCGDERPCQRCIKRGFQDAC). 3 stretches are compositionally biased toward polar residues: residues 129 to 213 (NNVN…TPSA), 267 to 277 (PSDSGAQRGSI), and 361 to 379 (MMTTSSATFEDTTNSGAFN). Disordered regions lie at residues 129-224 (NNVN…FNST), 264-297 (DTPPSDSGAQRGSIGQNGSGTFGLTGSSFSESPS), 353-399 (SPAS…STPQ), 533-567 (NHNVNTGGSSGLMTGSTSRGSYTPRPYSSEVYNSS), and 627-666 (GSNGEADAGLNGEATSNETNELNGSHTNGATTNGRGQRRW). Low complexity-rich tracts occupy residues 380–399 (SRQNVPVSQQRQQPVVSTPQ) and 543–553 (GLMTGSTSRGS). Residues 639 to 661 (EATSNETNELNGSHTNGATTNGR) are compositionally biased toward polar residues.

The protein belongs to the ERT1/acuK family.

The protein resides in the nucleus. Functionally, transcription factor which regulates nonfermentable carbon utilization. Activator of gluconeogenetic genes. The protein is Transcription activator of gluconeogenesis TRV_01442 of Trichophyton verrucosum (strain HKI 0517).